Here is a 393-residue protein sequence, read N- to C-terminus: GTP exchange factor for ARFs 1 (393 aa).

Residues 1 to 12 are compositionally biased toward polar residues; sequence MSSRYSERNGLS. A disordered region spans residues 1–21; sequence MSSRYSERNGLSETEKMTLPK. The stretch at 12 to 54 forms a coiled coil; sequence SETEKMTLPKVRKRKAQLVDEIEALKNEVREVDEELDQVYYTH. The SEC7 domain occupies 53–239; the sequence is THPKSKEYHK…TEVYESVSVT (187 aa). Positions 261–377 constitute a PH domain; the sequence is HAEREGWLFK…MRSWINAISR (117 aa).

In terms of biological role, promotes guanine-nucleotide exchange on ARF. Promotes the activation of ARF through replacement of GDP with GTP. Plays a role in cell shedding during embryogenesis, probably by promoting the endocytosis of cell adhesion molecules. The sequence is that of GTP exchange factor for ARFs 1 (grp-1) from Caenorhabditis elegans.